We begin with the raw amino-acid sequence, 144 residues long: uncharacterized protein (144 aa).

A disordered region spans residues 90–144; the sequence is KKEYSALKKSGKIHKVGGSKSSGHRKTKKPKKSMKGGSKTKKLSEKQLMKELLAM. The segment covering 98–130 has biased composition (basic residues); sequence KSGKIHKVGGSKSSGHRKTKKPKKSMKGGSKTK.

This is an uncharacterized protein from Sputnik virophage.